Consider the following 217-residue polypeptide: Vacuolar protein-sorting-associated protein 37 homolog 1 (217 aa).

The disordered stretch occupies residues 1-49 (MFNFWGSKDQQQGQSRPQEASSQSPWYSPSLVSSPSSSRPQSSGQISAQ). Residues 8 to 20 (KDQQQGQSRPQEA) are compositionally biased toward polar residues. The segment covering 21 to 47 (SSQSPWYSPSLVSSPSSSRPQSSGQIS) has biased composition (low complexity). Residues 137–217 (QEKLNELERQ…IHLAAKTSNI (81 aa)) form the VPS37 C-terminal domain.

It belongs to the VPS37 family. As to quaternary structure, component of the endosomal sorting required for transport complex I (ESCRT-I), composed of ELC, VPS28 and VPS37. Interacts with ELC.

The protein localises to the endosome. Component of the ESCRT-I complex (endosomal sorting complex required for transport I), a regulator of vesicular trafficking process. Required for the sorting of endocytic ubiquitinated cargos into multivesicular bodies (MVBs). This is Vacuolar protein-sorting-associated protein 37 homolog 1 (VPS37-1) from Arabidopsis thaliana (Mouse-ear cress).